Consider the following 153-residue polypeptide: Transcriptional repressor NrdR (153 aa).

A zinc finger spans residues 3-34; it reads CPSCSHNGTRVLDSRPVDEGRSIRRRRECESC. An ATP-cone domain is found at 49-139; it reads LIVVKKEGTR…VYRQFKDLNV (91 aa).

Belongs to the NrdR family. Zn(2+) is required as a cofactor.

Functionally, negatively regulates transcription of bacterial ribonucleotide reductase nrd genes and operons by binding to NrdR-boxes. The protein is Transcriptional repressor NrdR of Bacillus anthracis (strain A0248).